We begin with the raw amino-acid sequence, 100 residues long: Small ribosomal subunit protein uS14c (100 aa).

This sequence belongs to the universal ribosomal protein uS14 family. Part of the 30S ribosomal subunit.

Its subcellular location is the plastid. The protein resides in the chloroplast. Its function is as follows. Binds 16S rRNA, required for the assembly of 30S particles. The protein is Small ribosomal subunit protein uS14c of Rhodomonas salina (Cryptomonas salina).